Here is a 431-residue protein sequence, read N- to C-terminus: Gamma-glutamyl phosphate reductase (431 aa).

The protein belongs to the gamma-glutamyl phosphate reductase family.

Its subcellular location is the cytoplasm. It carries out the reaction L-glutamate 5-semialdehyde + phosphate + NADP(+) = L-glutamyl 5-phosphate + NADPH + H(+). It functions in the pathway amino-acid biosynthesis; L-proline biosynthesis; L-glutamate 5-semialdehyde from L-glutamate: step 2/2. Its function is as follows. Catalyzes the NADPH-dependent reduction of L-glutamate 5-phosphate into L-glutamate 5-semialdehyde and phosphate. The product spontaneously undergoes cyclization to form 1-pyrroline-5-carboxylate. This is Gamma-glutamyl phosphate reductase from Bifidobacterium longum subsp. infantis (strain ATCC 15697 / DSM 20088 / JCM 1222 / NCTC 11817 / S12).